A 100-amino-acid polypeptide reads, in one-letter code: Large ribosomal subunit protein bL21 (100 aa).

It belongs to the bacterial ribosomal protein bL21 family. In terms of assembly, part of the 50S ribosomal subunit. Contacts protein L20.

In terms of biological role, this protein binds to 23S rRNA in the presence of protein L20. This chain is Large ribosomal subunit protein bL21, found in Deinococcus deserti (strain DSM 17065 / CIP 109153 / LMG 22923 / VCD115).